A 208-amino-acid chain; its full sequence is Redox-sensing transcriptional repressor Rex (208 aa).

The segment at residues I18 to I57 is a DNA-binding region (H-T-H motif). NAD(+) is bound at residue G92 to G97.

Belongs to the transcriptional regulatory Rex family. Homodimer.

The protein resides in the cytoplasm. Its function is as follows. Modulates transcription in response to changes in cellular NADH/NAD(+) redox state. The polypeptide is Redox-sensing transcriptional repressor Rex (Latilactobacillus sakei subsp. sakei (strain 23K) (Lactobacillus sakei subsp. sakei)).